The following is a 192-amino-acid chain: UPF0149 protein YPO0911/y3298/YP_3608 (192 aa).

This sequence belongs to the UPF0149 family.

The chain is UPF0149 protein YPO0911/y3298/YP_3608 from Yersinia pestis.